Consider the following 98-residue polypeptide: NADH-ubiquinone oxidoreductase chain 4L (98 aa).

The next 3 helical transmembrane spans lie at 1 to 21, 29 to 49, and 59 to 79; these read MSLVHMNILLAFTMSLTGLLM, ALLCLEGMMLSLFILMTITIL, and TPIILLVFAACEAAVGLALLV.

Belongs to the complex I subunit 4L family. In terms of assembly, core subunit of respiratory chain NADH dehydrogenase (Complex I) which is composed of 45 different subunits.

It is found in the mitochondrion inner membrane. The catalysed reaction is a ubiquinone + NADH + 5 H(+)(in) = a ubiquinol + NAD(+) + 4 H(+)(out). Functionally, core subunit of the mitochondrial membrane respiratory chain NADH dehydrogenase (Complex I) which catalyzes electron transfer from NADH through the respiratory chain, using ubiquinone as an electron acceptor. Part of the enzyme membrane arm which is embedded in the lipid bilayer and involved in proton translocation. This is NADH-ubiquinone oxidoreductase chain 4L (MT-ND4L) from Lipotes vexillifer (Yangtze river dolphin).